A 285-amino-acid polypeptide reads, in one-letter code: MVHKKRGGVTSWLFRKSPVHNVLPLLHSWESCHQATGCGVQLCHPTARTAPQPQCPGPLAQGAAPSPSTPGSVKVASPLECSICFSGYDNIFKTPKELSCSHVFCLECLARLAAAQPAGRSGREAVPCPFCRQPTTVPVAGAPALRTSRQLQAKLPAHLQREEPVWLEGTKLCCRPLPTTSGQEDGGFVSVDVGLSKPAEPTLPVPVQDPAPNPGWLARCWARFRDWRRVALVSVLLLVLFCVILWPVQCALKTGNLRCINRPPAATATATVTTDALSFGVLANN.

Residues 81–132 form an RING-type zinc finger; that stretch reads CSICFSGYDNIFKTPKELSCSHVFCLECLARLAAAQPAGRSGREAVPCPFCR. Residues 230-250 form a helical membrane-spanning segment; sequence VALVSVLLLVLFCVILWPVQC.

The protein localises to the membrane. This Mus musculus (Mouse) protein is RING finger protein 223 (Rnf223).